The chain runs to 430 residues: C4-dicarboxylate transport protein (430 aa).

8 helical membrane passes run 9-29, 45-65, 79-99, 149-169, 185-205, 223-243, 308-328, and 356-376; these read VLYV…HFYP, LIKM…IAGM, LLYF…ATHL, GEIL…AHLG, VLFG…FGAM, LIGT…GAIA, IYMT…LTWM, and AATL…ILGI.

It belongs to the dicarboxylate/amino acid:cation symporter (DAACS) (TC 2.A.23) family.

The protein localises to the cell inner membrane. Responsible for the transport of dicarboxylates such as succinate, fumarate, and malate from the periplasm across the membrane. The chain is C4-dicarboxylate transport protein from Burkholderia orbicola (strain AU 1054).